Reading from the N-terminus, the 168-residue chain is Crossover junction endodeoxyribonuclease RuvC (168 aa).

Active-site residues include D9, E69, and D141. Mg(2+) is bound by residues D9, E69, and D141.

This sequence belongs to the RuvC family. In terms of assembly, homodimer which binds Holliday junction (HJ) DNA. The HJ becomes 2-fold symmetrical on binding to RuvC with unstacked arms; it has a different conformation from HJ DNA in complex with RuvA. In the full resolvosome a probable DNA-RuvA(4)-RuvB(12)-RuvC(2) complex forms which resolves the HJ. It depends on Mg(2+) as a cofactor.

The protein resides in the cytoplasm. The catalysed reaction is Endonucleolytic cleavage at a junction such as a reciprocal single-stranded crossover between two homologous DNA duplexes (Holliday junction).. In terms of biological role, the RuvA-RuvB-RuvC complex processes Holliday junction (HJ) DNA during genetic recombination and DNA repair. Endonuclease that resolves HJ intermediates. Cleaves cruciform DNA by making single-stranded nicks across the HJ at symmetrical positions within the homologous arms, yielding a 5'-phosphate and a 3'-hydroxyl group; requires a central core of homology in the junction. The consensus cleavage sequence is 5'-(A/T)TT(C/G)-3'. Cleavage occurs on the 3'-side of the TT dinucleotide at the point of strand exchange. HJ branch migration catalyzed by RuvA-RuvB allows RuvC to scan DNA until it finds its consensus sequence, where it cleaves and resolves the cruciform DNA. This chain is Crossover junction endodeoxyribonuclease RuvC, found in Bdellovibrio bacteriovorus (strain ATCC 15356 / DSM 50701 / NCIMB 9529 / HD100).